Consider the following 84-residue polypeptide: UPF0457 protein BALH_2270 (84 aa).

The protein belongs to the UPF0457 family.

In Bacillus thuringiensis (strain Al Hakam), this protein is UPF0457 protein BALH_2270.